The following is a 228-amino-acid chain: MKLDEPIIAINFKTYIEATGKRALEIAKAAERVYKETGVTIVVAPQLVDLRMIAENVEIPVFAQHIDPIKPGSHTGHVLPEAVKEAGAVGTLLNHSENRMILADLEAAISRAKEVGLITMVCSNNPAVSAAVAALEPDYVAVEPPELIGTGIPVSKAKPEVITNTVELVRKVNPKVKVLCGAGISTGEDVRKAIELGTVGVLLASGVTKAKDPEKAIRDLVSGIIGKD.

11–13 provides a ligand contact to substrate; sequence NFK. The active-site Electrophile is histidine 95. Catalysis depends on glutamate 143, which acts as the Proton acceptor. Substrate is bound by residues isoleucine 148, glycine 183, and 204–205; that span reads AS.

This sequence belongs to the triosephosphate isomerase family. Homotetramer; dimer of dimers.

It is found in the cytoplasm. It catalyses the reaction D-glyceraldehyde 3-phosphate = dihydroxyacetone phosphate. Its pathway is carbohydrate biosynthesis; gluconeogenesis. It participates in carbohydrate degradation; glycolysis; D-glyceraldehyde 3-phosphate from glycerone phosphate: step 1/1. In terms of biological role, involved in the gluconeogenesis. Catalyzes stereospecifically the conversion of dihydroxyacetone phosphate (DHAP) to D-glyceraldehyde-3-phosphate (G3P). This is Triosephosphate isomerase from Pyrococcus horikoshii (strain ATCC 700860 / DSM 12428 / JCM 9974 / NBRC 100139 / OT-3).